The sequence spans 116 residues: Non-specific lipid-transfer protein 1 (116 aa).

A signal peptide spans 1–25 (MARAQLVLVALVAALLLAAPHAAVA). 4 disulfides stabilise this stretch: Cys-28–Cys-75, Cys-38–Cys-52, Cys-53–Cys-98, and Cys-73–Cys-112.

This sequence belongs to the plant LTP family. As to expression, aleurone (external part) of the seeds.

Functionally, plant non-specific lipid-transfer proteins transfer phospholipids as well as galactolipids across membranes. May play a role in wax or cutin deposition in the cell walls of expanding epidermal cells and certain secretory tissues. In Oryza sativa subsp. indica (Rice), this protein is Non-specific lipid-transfer protein 1 (LTP).